The primary structure comprises 392 residues: Tryptophan synthase beta chain (392 aa).

At K86 the chain carries N6-(pyridoxal phosphate)lysine.

The protein belongs to the TrpB family. As to quaternary structure, tetramer of two alpha and two beta chains. The cofactor is pyridoxal 5'-phosphate.

It catalyses the reaction (1S,2R)-1-C-(indol-3-yl)glycerol 3-phosphate + L-serine = D-glyceraldehyde 3-phosphate + L-tryptophan + H2O. Its pathway is amino-acid biosynthesis; L-tryptophan biosynthesis; L-tryptophan from chorismate: step 5/5. The beta subunit is responsible for the synthesis of L-tryptophan from indole and L-serine. The sequence is that of Tryptophan synthase beta chain from Methanocorpusculum labreanum (strain ATCC 43576 / DSM 4855 / Z).